Consider the following 71-residue polypeptide: General transcription and DNA repair factor IIH subunit TFB5 (71 aa).

It belongs to the TFB5 family. Component of the 7-subunit TFIIH core complex composed of XPB, XPD, TFB1/GTF2H1, GTF2H2/P44, TFB4/GTF2H3, TFB2/GTF2H4 and TFB5/GTF2H5, which is active in NER. The core complex associates with the 3-subunit CDK-activating kinase (CAK) module composed of CYCH1/cyclin H1, CDKD and MAT1/At4g30820 to form the 10-subunit holoenzyme (holo-TFIIH) active in transcription.

Its subcellular location is the nucleus. Functionally, component of the general transcription and DNA repair factor IIH (TFIIH) core complex, which is involved in general and transcription-coupled nucleotide excision repair (NER) of damaged DNA and, when complexed to CAK, in RNA transcription by RNA polymerase II. In NER, TFIIH acts by opening DNA around the lesion to allow the excision of the damaged oligonucleotide and its replacement by a new DNA fragment. In transcription, TFIIH has an essential role in transcription initiation. When the pre-initiation complex (PIC) has been established, TFIIH is required for promoter opening and promoter escape. Phosphorylation of the C-terminal tail (CTD) of the largest subunit of RNA polymerase II by the kinase module CAK controls the initiation of transcription. The sequence is that of General transcription and DNA repair factor IIH subunit TFB5 from Arabidopsis thaliana (Mouse-ear cress).